The sequence spans 134 residues: Ribonuclease VapC1 (134 aa).

The PINc domain occupies 3 to 132 (YMLDTNIIIY…RITDLQWQDW (130 aa)). Residues Asp-6 and Asp-99 each contribute to the Mg(2+) site.

The protein belongs to the PINc/VapC protein family. Requires Mg(2+) as cofactor.

Toxic component of a type II toxin-antitoxin (TA) system. Acts as an RNase, its toxic effect is neutralized by VapB1 antitoxin. In Haemophilus influenzae (strain ATCC 51907 / DSM 11121 / KW20 / Rd), this protein is Ribonuclease VapC1.